The following is a 973-amino-acid chain: Vacuolar membrane protease (973 aa).

Residues 1-15 (MARQYSRTNPLGFTP) are Cytoplasmic-facing. The chain crosses the membrane as a helical span at residues 16 to 36 (WPVTIITALVYLALVIPLLVV). Topologically, residues 37 to 383 (QHVVPSAPGS…STLAVFELHT (347 aa)) are vacuolar. Residues Asn52 and Asn115 are each glycosylated (N-linked (GlcNAc...) asparagine). The Zn(2+) site is built by His167 and Asp179. Glu213 acts as the Proton acceptor in catalysis. Residues Glu214, Glu239, and His312 each coordinate Zn(2+). The helical transmembrane segment at 384 to 404 (LFALSVTLLIVAPLVLLATSI) threads the bilayer. Residues 405–438 (ALVRADRMYLFRSTARVPGSDDFDEGVSLQGVRG) are Cytoplasmic-facing. Residues 439–459 (FFRFPFLLVIPTGVAVGLAYL) form a helical membrane-spanning segment. Over 460-469 (VTKINPYIIH) the chain is Vacuolar. The chain crosses the membrane as a helical span at residues 470–490 (SSEYAVWSMMISAWVFLAWFV). At 491-504 (SRVADFARPSAFHR) the chain is on the cytoplasmic side. The helical transmembrane segment at 505–525 (VYVLTWMFVAEWVLLVIATVY) threads the bilayer. Residues 526–529 (ENRY) lie on the Vacuolar side of the membrane. The helical transmembrane segment at 530–550 (GLAGGYFVFFALSGTFLATWI) threads the bilayer. The Cytoplasmic segment spans residues 551–674 (SYLELFALPR…GLPKWTWVLQ (124 aa)). A disordered region spans residues 572 to 623 (SRYASNHGSRLGTSSGEHGMDDAEDEEDDDGDDEDEARNVEEEPTESTSLLR). A compositionally biased stretch (polar residues) spans 574–587 (YASNHGSRLGTSSG). Residues 593–607 (DAEDEEDDDGDDEDE) show a composition bias toward acidic residues. A helical membrane pass occupies residues 675–695 (FLLSAPIVLILVGPLALLLTA). Residues 696-708 (ALRQTAQDGSSPL) lie on the Vacuolar side of the membrane. The chain crosses the membrane as a helical span at residues 709–729 (FVYIAIAVLTTLLVTPLLPFI). At 730–735 (HRYTHH) the chain is on the cytoplasmic side. The helical transmembrane segment at 736–756 (IPLFLLLVFTGTLIYNLVAFP) threads the bilayer. At 757–973 (FSPSNRLKLF…LVEGSRRFEV (217 aa)) the chain is on the vacuolar side. Residues Asn803 and Asn839 are each glycosylated (N-linked (GlcNAc...) asparagine).

This sequence belongs to the peptidase M28 family. Requires Zn(2+) as cofactor.

The protein resides in the vacuole membrane. Its function is as follows. May be involved in vacuolar sorting and osmoregulation. This Aspergillus clavatus (strain ATCC 1007 / CBS 513.65 / DSM 816 / NCTC 3887 / NRRL 1 / QM 1276 / 107) protein is Vacuolar membrane protease.